A 500-amino-acid chain; its full sequence is uncharacterized protein (500 aa).

This is an uncharacterized protein from Halorubrum sp. PV6 (HRPV-1).